The following is a 977-amino-acid chain: Protein bicaudal C homolog 1 (977 aa).

Residues 1–43 (MASQSEPGYLAAAQSDPGSNSERSTDSPVAGSEDDLVAAAPLL) form a disordered region. Phosphoserine is present on residues Ser27, Ser32, and Ser45. KH domains follow at residues 134–201 (RVTL…RARI) and 286–350 (PVST…RQYL). Lys400 carries the post-translational modification N6-acetyllysine. Over residues 590-621 (SLGEKVLSSNHGDPSMQTAGPEQASPKSNSVE) the composition is skewed to polar residues. Disordered stretches follow at residues 590-622 (SLGE…SVEG), 667-702 (GTKN…GSER), and 794-848 (EGSS…KSRE). Phosphoserine occurs at positions 614 and 681. Basic and acidic residues predominate over residues 692–702 (LADKKAPGSER). The segment covering 794 to 803 (EGSSLSLSRS) has biased composition (low complexity). Residues 875–938 (FKGSDLPELF…LLAISELSKN (64 aa)) enclose the SAM domain.

It belongs to the BicC family. As to quaternary structure, interacts (via KH domains) with ANKS6 (via SAM domain) in an RNA-dependent manner. Interacts with ANKS3. As to expression, in the adult, predominantly expressed in heart and kidney. In 8 week old mice, expressed in growing primary oocytes and in the stromal cells of the theca.

Its subcellular location is the cytoplasm. Its function is as follows. Putative RNA-binding protein. May be involved in regulating gene expression during embryonic development. This is Protein bicaudal C homolog 1 (Bicc1) from Mus musculus (Mouse).